Here is a 445-residue protein sequence, read N- to C-terminus: 2-oxoisovalerate dehydrogenase subunit alpha, mitochondrial (445 aa).

The transit peptide at 1 to 45 directs the protein to the mitochondrion; it reads MAVAIAAARVWRLNRGLSQAALLLLRRPGARGLARSHPRRQQQQF. The tract at residues 33–54 is disordered; it reads LARSHPRRQQQQFSSLDDKPQF. Tyr158 and Arg159 together coordinate thiamine diphosphate. Ser206 contributes to the K(+) binding site. Ser207 contributes to the thiamine diphosphate binding site. Residues Pro208, Thr211, and Gln212 each coordinate K(+). Residue Glu238 participates in Mg(2+) binding. Positions 239, 240, and 265 each coordinate thiamine diphosphate. Residues Asn267 and Tyr269 each coordinate Mg(2+). A thiamine diphosphate-binding site is contributed by His336. Position 337 is a phosphoserine; by BCKDK (Ser337). Position 338 is a phosphothreonine (Thr338). Ser339 and Ser347 each carry phosphoserine. N6-acetyllysine; alternate is present on Lys356. At Lys356 the chain carries N6-succinyllysine; alternate. An N6-succinyllysine modification is found at Lys380.

Belongs to the BCKDHA family. As to quaternary structure, heterotetramer of 2 alpha/BCKDHA and 2 beta chains/BCKDHB that forms the branched-chain alpha-keto acid decarboxylase (E1) component of the BCKD complex. The branched-chain alpha-ketoacid dehydrogenase is a large complex composed of three major building blocks E1, E2 and E3. It is organized around E2, a 24-meric cubic core composed of DBT, to which are associated 6 to 12 copies of E1, and approximately 6 copies of the dehydrogenase E3, a DLD dimer. Interacts with PPM1K. Thiamine diphosphate serves as cofactor. Mg(2+) is required as a cofactor. Phosphorylated at Ser-337 by BCKDK and dephosphorylated by protein phosphatase PPM1K.

It is found in the mitochondrion matrix. The enzyme catalyses N(6)-[(R)-lipoyl]-L-lysyl-[protein] + 3-methyl-2-oxobutanoate + H(+) = N(6)-[(R)-S(8)-2-methylpropanoyldihydrolipoyl]-L-lysyl-[protein] + CO2. Its function is as follows. Together with BCKDHB forms the heterotetrameric E1 subunit of the mitochondrial branched-chain alpha-ketoacid dehydrogenase (BCKD) complex. The BCKD complex catalyzes the multi-step oxidative decarboxylation of alpha-ketoacids derived from the branched-chain amino-acids valine, leucine and isoleucine producing CO2 and acyl-CoA which is subsequently utilized to produce energy. The E1 subunit catalyzes the first step with the decarboxylation of the alpha-ketoacid forming an enzyme-product intermediate. A reductive acylation mediated by the lipoylamide cofactor of E2 extracts the acyl group from the E1 active site for the next step of the reaction. The polypeptide is 2-oxoisovalerate dehydrogenase subunit alpha, mitochondrial (BCKDHA) (Pan troglodytes (Chimpanzee)).